A 585-amino-acid chain; its full sequence is MLHRHGSKQKNFENIAGKVVHDLAGLQLLSNDVQKSAVQSGHQGSNNMRDTSSQGMANKYSVPKKGLPADLSYQLIHNELTLDGNPHLNLASFVNTFTTDQARKLIDENLTKNLADNDEYPQLIELTQRCISMLAQLWHANPDEEPIGCATTGSSEAIMLGGLAMKKRWEHRMKNAGKDASKPNIIMSSACQVALEKFTRYFEVECRLVPVSHRSHHMLDPESLWDYVDENTIGCFVILGTTYTGHLENVEKVADVLSQIEAKHPDWSNTDIPIHADGASGGFIIPFGFEKEHMKAYGMERWGFNHPRVVSMNTSGHKFGLTTPGLGWVLWRDESLLADELRFKLKYLGGVEETFGLNFSRPGFQVVHQYFNFVSLGHSGYRTQFQNSLFVARAFSFELLNSSKLPGCFEIVSSIHESIENDSAPKSVKDYWEHPQAYKPGVPLVAFKLSKKFHEEYPEVPQAILSSLLRGRGWIIPNYPLPKATDGSDEKEVLRVVFRSEMKLDLAQLLIVDIESILTKLIHSYEKVCHHIELASEQTPERKSSFIYEMLLALASPQDDIPTPDEIEKKNKLKETTTRNYRGTC.

Residues 35 to 56 (KSAVQSGHQGSNNMRDTSSQGM) show a composition bias toward polar residues. The segment at 35–60 (KSAVQSGHQGSNNMRDTSSQGMANKY) is disordered. An N6-(pyridoxal phosphate)lysine modification is found at Lys318.

The protein belongs to the group II decarboxylase family. It depends on pyridoxal 5'-phosphate as a cofactor.

It catalyses the reaction L-glutamate + H(+) = 4-aminobutanoate + CO2. In Saccharomyces cerevisiae (strain ATCC 204508 / S288c) (Baker's yeast), this protein is Glutamate decarboxylase (GAD1).